The chain runs to 255 residues: Electron transfer flavoprotein beta subunit lysine methyltransferase (255 aa).

The transit peptide at 1 to 32 (MAFSLCWKAPRSPWSFLQAVNNGSPLFLWRTV) directs the protein to the mitochondrion.

This sequence belongs to the methyltransferase superfamily. ETFBKMT family. As to quaternary structure, interacts with HSPD1; this protein may possibly be a methylation substrate.

Its subcellular location is the cytoplasm. It is found in the mitochondrion matrix. It catalyses the reaction L-lysyl-[protein] + 3 S-adenosyl-L-methionine = N(6),N(6),N(6)-trimethyl-L-lysyl-[protein] + 3 S-adenosyl-L-homocysteine + 3 H(+). Its function is as follows. Protein-lysine methyltransferase that selectively trimethylates the flavoprotein ETFB in mitochondria. Thereby, may negatively regulate the function of ETFB in electron transfer from Acyl-CoA dehydrogenases. The protein is Electron transfer flavoprotein beta subunit lysine methyltransferase of Mus musculus (Mouse).